A 347-amino-acid chain; its full sequence is Outer membrane protein A (347 aa).

Residues 1–21 form the signal peptide; the sequence is MKKQALTIIFLLVSLVTGIQA. The next 8 membrane-spanning stretches (beta stranded) occupy residues 26-36, 63-74, 78-86, 105-116, 121-129, 154-163, 168-175, and 194-202; these read HWYLGTKMGWS, APVFGLFLGYEF, FSFEIENDT, NSLQLATKLSYP, FHIYTQLGG, PNVSLGAEYI, FITRLDYT, and DVALSFGWK. A hinge-like region spans residues 207–218; that stretch reads NINEIFSSYIPQ. The OmpA-like domain maps to 220-347; that stretch reads SDKQYVALNE…RRVEIEVLSD (128 aa). A disulfide bridge connects residues Cys-321 and Cys-333.

This sequence belongs to the outer membrane OOP (TC 1.B.6) superfamily. OmpA family. As to quaternary structure, monomer and homodimer.

It localises to the cell outer membrane. In terms of biological role, with TolR probably plays a role in maintaining the position of the peptidoglycan cell wall in the periplasm. Acts as a porin with low permeability that allows slow penetration of small solutes; an internal gate slows down solute passage. This chain is Outer membrane protein A, found in Buchnera aphidicola subsp. Schizaphis graminum (strain Sg).